A 1011-amino-acid polypeptide reads, in one-letter code: CRM-domain containing factor CFM2, chloroplastic (1011 aa).

A chloroplast-targeting transit peptide spans 1 to 45 (MLLPLFHQQPLILAKTFPDRIFPPFLVPNTLVSRRNVSRANSGIF). Residues 77–90 (HDSPTRRITGEESG) are compositionally biased toward basic and acidic residues. The tract at residues 77–96 (HDSPTRRITGEESGKNSPGE) is disordered. CRM domains lie at 164–260 (LTLP…YFVS), 376–473 (PKLT…AVSS), and 577–677 (EGIT…QCLR). Disordered stretches follow at residues 721–810 (DSAT…GNSL) and 841–872 (LNANRKLPGSSTGSGSQISALRERKSENDGLV). Residues 722–736 (SATNETWSDGESSNM) show a composition bias toward polar residues. A compositionally biased stretch (basic and acidic residues) spans 743-757 (ENQHTEPEKAREKIE). Polar residues predominate over residues 762 to 771 (SDLSVPSSGE). Residues 772 to 782 (ENWEDDSEGEV) show a composition bias toward acidic residues. Over residues 849-859 (GSSTGSGSQIS) the composition is skewed to polar residues. A CRM 4 domain is found at 873–972 (TDLSNRERLI…WGAEEEMKSF (100 aa)).

As to quaternary structure, interacts with RNA. Part of large ribonucleo-protein particles that contain CAF1 and/or CAF2.

It is found in the plastid. The protein localises to the chloroplast stroma. Binds specific group II introns in chloroplasts and facilitates their splicing. Acts on both subgroup IIA and subgroup IIB introns. The substrates of the subgroup IIB also require the CRM domain proteins CAF1 or CAF2, with a simultaneous binding of CFM2 and CAF1 or CAF2. Can bind to and promote the splicing of the single group I intron in chloroplast tRNA transcript of trnL-UAA gene. The sequence is that of CRM-domain containing factor CFM2, chloroplastic from Arabidopsis thaliana (Mouse-ear cress).